A 411-amino-acid polypeptide reads, in one-letter code: 2,3-bisphosphoglycerate-independent phosphoglycerate mutase (411 aa).

Belongs to the BPG-independent phosphoglycerate mutase family. A-PGAM subfamily.

It carries out the reaction (2R)-2-phosphoglycerate = (2R)-3-phosphoglycerate. It participates in carbohydrate degradation; glycolysis; pyruvate from D-glyceraldehyde 3-phosphate: step 3/5. Functionally, catalyzes the interconversion of 2-phosphoglycerate and 3-phosphoglycerate. The chain is 2,3-bisphosphoglycerate-independent phosphoglycerate mutase from Pyrobaculum arsenaticum (strain DSM 13514 / JCM 11321 / PZ6).